Here is a 498-residue protein sequence, read N- to C-terminus: Pentatricopeptide repeat-containing protein At3g61360 (498 aa).

PPR repeat units follow at residues 102-132, 138-172, 175-205, 209-243, 244-278, 279-313, 314-348, 349-385, and 386-420; these read TSDS…VRKD, SFKS…IFRK, GVDE…LHSR, DVKT…GFKP, NSVT…DFDI, TVQI…GLTP, DCGA…GIEP, DSVT…SLVP, and KTPT…GYCP.

It belongs to the PPR family. P subfamily.

The chain is Pentatricopeptide repeat-containing protein At3g61360 from Arabidopsis thaliana (Mouse-ear cress).